The following is a 377-amino-acid chain: Chorismate synthase (377 aa).

2 residues coordinate NADP(+): Arg-48 and Arg-54. Residues Arg-125–Ser-127, Asn-238–Ala-239, Gly-278, Lys-293–Ser-297, and Arg-319 contribute to the FMN site.

This sequence belongs to the chorismate synthase family. In terms of assembly, homotetramer. The cofactor is FMNH2.

The enzyme catalyses 5-O-(1-carboxyvinyl)-3-phosphoshikimate = chorismate + phosphate. Its pathway is metabolic intermediate biosynthesis; chorismate biosynthesis; chorismate from D-erythrose 4-phosphate and phosphoenolpyruvate: step 7/7. Catalyzes the anti-1,4-elimination of the C-3 phosphate and the C-6 proR hydrogen from 5-enolpyruvylshikimate-3-phosphate (EPSP) to yield chorismate, which is the branch point compound that serves as the starting substrate for the three terminal pathways of aromatic amino acid biosynthesis. This reaction introduces a second double bond into the aromatic ring system. The protein is Chorismate synthase of Aromatoleum aromaticum (strain DSM 19018 / LMG 30748 / EbN1) (Azoarcus sp. (strain EbN1)).